Reading from the N-terminus, the 89-residue chain is Dynein light chain 1, cytoplasmic (89 aa).

It belongs to the dynein light chain family. Interacts with spn-F. Forms ternary complexes with spn-F and IKKepsilon. In terms of tissue distribution, ubiquitous.

It is found in the cytoplasm. Its subcellular location is the cytoskeleton. Functionally, acts as a non-catalytic accessory component of a dynein complex. This is Dynein light chain 1, cytoplasmic (ctp) from Drosophila melanogaster (Fruit fly).